Here is an 85-residue protein sequence, read N- to C-terminus: Thioredoxin (85 aa).

The Glutaredoxin domain occupies 1–85 (MSKVKIELFT…ALVEAIKKRL (85 aa)). Cys14 and Cys17 form a disulfide bridge.

Belongs to the glutaredoxin family.

The protein localises to the cytoplasm. In terms of biological role, acts to maintain redox homeostasis; functions as a protein disulfide reductase. This chain is Thioredoxin (trx), found in Methanocaldococcus jannaschii (strain ATCC 43067 / DSM 2661 / JAL-1 / JCM 10045 / NBRC 100440) (Methanococcus jannaschii).